The primary structure comprises 491 residues: Katanin p60 ATPase-containing subunit A1 (491 aa).

The tract at residues 1-29 (MSLLMISENVKLAREYALLGNYDSAMVYY) is interaction with KATNB1. The interaction with dynein and NDEL1 stretch occupies residues 1–75 (MSLLMISENV…VKDIMKTLES (75 aa)). Residues 1 to 185 (MSLLMISENV…EPETNKFDST (185 aa)) are interaction with microtubules. Phosphoserine; by DYRK2 occurs at positions 42 and 109. Residues 87–185 (QHDLPASEGE…EPETNKFDST (99 aa)) form a disordered region. Residues 117–144 (SSQYSDPKSHGNRPSTTVRVHRSSAQNV) show a composition bias toward polar residues. Thr-133 carries the phosphothreonine; by DYRK2 modification. The span at 145 to 169 (HNDRGKAVRCREKKEQNKGREEKNK) shows a compositional bias: basic and acidic residues. Ser-170 bears the Phosphoserine mark. 249–256 (GPPGTGKT) serves as a coordination point for ATP.

This sequence belongs to the AAA ATPase family. Katanin p60 subunit A1 subfamily. As to quaternary structure, can homooligomerize into hexameric rings, which may be promoted by interaction with microtubules. Interacts with KATNB1, which may serve as a targeting subunit. Interacts with ASPM; the katanin complex formation KATNA1:KATNB1 is required for the association of ASPM. Interacts with dynein and NDEL1. Associates with the E3 ligase complex containing DYRK2, EDD/UBR5, DDB1 and DCAF1 proteins (EDVP complex). Interacts with KLHL42 (via the kelch domains). Interacts with CUL3; the interaction is enhanced by KLHL42. Interacts with KATNB1 and KATNBL1. Interacts with CAMSAP2 and CAMSAP3; leading to regulate the length of CAMSAP-decorated microtubule stretches. Phosphorylation by DYRK2 triggers ubiquitination and subsequent degradation. Post-translationally, ubiquitinated by the BCR(KLHL42) E3 ubiquitin ligase complex, leading to its proteasomal degradation. Ubiquitinated by the EDVP E3 ligase complex and subsequently targeted for proteasomal degradation.

It localises to the cytoplasm. It is found in the midbody. The protein resides in the cytoskeleton. Its subcellular location is the microtubule organizing center. The protein localises to the centrosome. It localises to the spindle pole. It is found in the spindle. It carries out the reaction n ATP + n H2O + a microtubule = n ADP + n phosphate + (n+1) alpha/beta tubulin heterodimers.. With respect to regulation, ATPase activity is stimulated by microtubules, which promote homooligomerization. ATP-dependent microtubule severing is stimulated by interaction with KATNB1. Catalytic subunit of a complex which severs microtubules in an ATP-dependent manner. Microtubule severing may promote rapid reorganization of cellular microtubule arrays and the release of microtubules from the centrosome following nucleation. Microtubule release from the mitotic spindle poles may allow depolymerization of the microtubule end proximal to the spindle pole, leading to poleward microtubule flux and poleward motion of chromosome. Microtubule release within the cell body of neurons may be required for their transport into neuronal processes by microtubule-dependent motor proteins. This transport is required for axonal growth. In Homo sapiens (Human), this protein is Katanin p60 ATPase-containing subunit A1.